We begin with the raw amino-acid sequence, 396 residues long: Dihydrolipoyllysine-residue acetyltransferase component of pyruvate dehydrogenase complex (396 aa).

The 69-residue stretch at 1–69 folds into the Lipoyl-binding domain; it reads MPDIGLEEVE…KTDALIMRCE (69 aa). Lysine 35 is modified (N6-lipoyllysine). The Peripheral subunit-binding (PSBD) domain maps to 104 to 141; the sequence is HATPLIRRLARNLNINLYDVVGTGPKNRILKEDLDLYQ. The active site involves histidine 369.

It belongs to the 2-oxoacid dehydrogenase family. As to quaternary structure, forms a 24-polypeptide structural core with octahedral symmetry. It depends on (R)-lipoate as a cofactor.

The enzyme catalyses N(6)-[(R)-dihydrolipoyl]-L-lysyl-[protein] + acetyl-CoA = N(6)-[(R)-S(8)-acetyldihydrolipoyl]-L-lysyl-[protein] + CoA. Functionally, the pyruvate dehydrogenase complex catalyzes the overall conversion of pyruvate to acetyl-CoA and CO(2). It contains multiple copies of three enzymatic components: pyruvate dehydrogenase (E1), dihydrolipoamide acetyltransferase (E2) and lipoamide dehydrogenase (E3). This chain is Dihydrolipoyllysine-residue acetyltransferase component of pyruvate dehydrogenase complex (aceF), found in Buchnera aphidicola subsp. Acyrthosiphon pisum (strain APS) (Acyrthosiphon pisum symbiotic bacterium).